Here is a 313-residue protein sequence, read N- to C-terminus: Guanine nucleotide-binding protein-like 3-like protein (313 aa).

Residues methionine 1–threonine 14 are compositionally biased toward basic residues. A disordered region spans residues methionine 1–lysine 41. The segment covering arginine 15–asparagine 27 has biased composition (basic and acidic residues). GTP is bound by residues serine 95–aspartate 98, glycine 178–asparagine 185, and threonine 212–serine 215.

This sequence belongs to the MMR1/HSR1 GTP-binding protein family.

It is found in the nucleus. The protein localises to the nucleolus. Functionally, required for normal processing of ribosomal pre-rRNA. Required for cell proliferation. Binds GTP. The polypeptide is Guanine nucleotide-binding protein-like 3-like protein (Encephalitozoon cuniculi (strain GB-M1) (Microsporidian parasite)).